The primary structure comprises 362 residues: Sphingolipid delta(4)-desaturase (362 aa).

Positions 1–10 (MAESTATTTA) are enriched in low complexity. Positions 1 to 20 (MAESTATTTAVPPPAEESWN) are disordered. Transmembrane regions (helical) follow at residues 60 to 80 (PLTK…AYLL), 90 to 110 (FFLT…LAIH), and 121 to 143 (TLYN…AASF). The Histidine box-1 motif lies at 110 to 114 (HELSH). Residues 147-151 (HMEHH) carry the Histidine box-2 motif. Helical transmembrane passes span 169 to 189 (LILF…LLFY), 200 to 220 (PFTL…YLVV), and 228 to 248 (LAYF…AGHF). The Histidine box-3 signature appears at 290–294 (HIEHH).

This sequence belongs to the fatty acid desaturase type 1 family. DEGS subfamily.

It localises to the membrane. The enzyme catalyses an N-acylsphinganine + 2 Fe(II)-[cytochrome b5] + O2 + 2 H(+) = an N-acylsphing-4-enine + 2 Fe(III)-[cytochrome b5] + 2 H2O. Its pathway is lipid metabolism; sphingolipid metabolism. Delta(4)-fatty-acid desaturase which introduces a double bond at the 4-position in the long-chain base (LCB) of ceramides. Required for sphingosine biosynthesis. The polypeptide is Sphingolipid delta(4)-desaturase (dsd1) (Schizosaccharomyces pombe (strain 972 / ATCC 24843) (Fission yeast)).